Reading from the N-terminus, the 500-residue chain is tRNA modification GTPase MnmE (500 aa).

Residues arginine 24, glutamate 120, and lysine 159 each contribute to the (6S)-5-formyl-5,6,7,8-tetrahydrofolate site. In terms of domain architecture, TrmE-type G spans glycine 256–alanine 420. Asparagine 266 is a binding site for K(+). Residues asparagine 266 to threonine 271, serine 285 to threonine 291, and aspartate 310 to glycine 313 contribute to the GTP site. Mg(2+) is bound at residue serine 270. Residues serine 285, isoleucine 287, and threonine 290 each coordinate K(+). Threonine 291 serves as a coordination point for Mg(2+). Lysine 500 is a (6S)-5-formyl-5,6,7,8-tetrahydrofolate binding site.

It belongs to the TRAFAC class TrmE-Era-EngA-EngB-Septin-like GTPase superfamily. TrmE GTPase family. Homodimer. Heterotetramer of two MnmE and two MnmG subunits. K(+) is required as a cofactor.

It is found in the cytoplasm. Exhibits a very high intrinsic GTPase hydrolysis rate. Involved in the addition of a carboxymethylaminomethyl (cmnm) group at the wobble position (U34) of certain tRNAs, forming tRNA-cmnm(5)s(2)U34. This chain is tRNA modification GTPase MnmE, found in Phocaeicola vulgatus (strain ATCC 8482 / DSM 1447 / JCM 5826 / CCUG 4940 / NBRC 14291 / NCTC 11154) (Bacteroides vulgatus).